The chain runs to 100 residues: UPF0045 protein MJ1052 (100 aa).

The protein belongs to the UPF0045 family.

In Methanocaldococcus jannaschii (strain ATCC 43067 / DSM 2661 / JAL-1 / JCM 10045 / NBRC 100440) (Methanococcus jannaschii), this protein is UPF0045 protein MJ1052.